The primary structure comprises 130 residues: Mini-ribonuclease 3 (130 aa).

The active site involves D19. The tract at residues 69–91 is disordered; that stretch reads EQDVVRRGRNAKGHGAPKSADPA.

The protein belongs to the MrnC RNase family. Homodimer. Mg(2+) serves as cofactor.

It localises to the cytoplasm. Functionally, involved in correct processing of both the 5' and 3' ends of 23S rRNA precursor. Processes 30S rRNA precursor transcript even in absence of ribonuclease 3 (Rnc); Rnc processes 30S rRNA into smaller rRNA precursors. In Symbiobacterium thermophilum (strain DSM 24528 / JCM 14929 / IAM 14863 / T), this protein is Mini-ribonuclease 3.